The sequence spans 452 residues: Keratin, type I cytoskeletal 42 (452 aa).

Positions 4-93 (TTSIRQFSTS…GVSDALLGGS (90 aa)) are head. 2 coiled-coil regions span residues 93 to 132 (SEKE…WYKK) and 188 to 407 (NLRM…HLAT). Positions 94 to 129 (EKETMQNLNDRLATYLDRVRALEEANTDLEVKIREW) are coil 1A. In terms of domain architecture, IF rod spans 94 to 405 (EKETMQNLND…RLLEGEDAHL (312 aa)). The segment at 130–147 (YKKQGPGPARDYSPYFKT) is linker 1. The segment at 148–239 (IEDLRNKILA…KNHEEEMNAL (92 aa)) is coil 1B. Residues 240 to 262 (RGQVGGDVNVEMDAAPGVDLSRI) are linker 12. The segment at 263–401 (LNEMRDQYEK…ATYRRLLEGE (139 aa)) is coil 2. A tail region spans residues 402–452 (DAHLATQYSSSLASQASREGTVTSRQVRTIVEEVQDGKVVSSREQVHRSTH).

It belongs to the intermediate filament family. Heterodimer of a type I and a type II keratin. Colocalizes with KRT8/KRT18 filament network.

The protein resides in the cytoplasm. In Rattus norvegicus (Rat), this protein is Keratin, type I cytoskeletal 42.